The following is a 318-amino-acid chain: tRNA-cytidine(32) 2-sulfurtransferase (318 aa).

Positions 52–57 (SGGKDS) match the PP-loop motif motif. The [4Fe-4S] cluster site is built by Cys127, Cys130, and Cys218.

It belongs to the TtcA family. Homodimer. The cofactor is Mg(2+). [4Fe-4S] cluster serves as cofactor.

Its subcellular location is the cytoplasm. The enzyme catalyses cytidine(32) in tRNA + S-sulfanyl-L-cysteinyl-[cysteine desulfurase] + AH2 + ATP = 2-thiocytidine(32) in tRNA + L-cysteinyl-[cysteine desulfurase] + A + AMP + diphosphate + H(+). The protein operates within tRNA modification. Catalyzes the ATP-dependent 2-thiolation of cytidine in position 32 of tRNA, to form 2-thiocytidine (s(2)C32). The sulfur atoms are provided by the cysteine/cysteine desulfurase (IscS) system. This is tRNA-cytidine(32) 2-sulfurtransferase from Actinobacillus pleuropneumoniae serotype 7 (strain AP76).